Here is a 435-residue protein sequence, read N- to C-terminus: Ras association domain-containing protein 9 (435 aa).

The interval 1–22 (MAPFGRNLLKTRHKNRSPTKDM) is disordered. The Ras-associating domain maps to 25 to 119 (EEKEIVVWVC…MQFVLVKTDA (95 aa)). Residues 195-291 (HTIHQQVQRM…KLSAEIEREV (97 aa)) are a coiled coil. A disordered region spans residues 371–423 (SKDGCQGKENRGKEAEASSSNGEIPPLTQRVFNTYTNDTDSDTGISSNHSQDS). Residues 375 to 386 (CQGKENRGKEAE) are compositionally biased toward basic and acidic residues. A compositionally biased stretch (polar residues) spans 400 to 423 (RVFNTYTNDTDSDTGISSNHSQDS).

As to quaternary structure, interacts with PAM. Testis, kidney, skeletal muscle, liver, lung, brain, heart, pituitary gland, adrenal gland and ovary.

The protein resides in the endosome. May play a role in regulating vesicuar trafficking in cells. The chain is Ras association domain-containing protein 9 (Rassf9) from Rattus norvegicus (Rat).